A 411-amino-acid chain; its full sequence is Serine hydroxymethyltransferase (411 aa).

A (6S)-5,6,7,8-tetrahydrofolate-binding site is contributed by 120 to 122 (GHL). N6-(pyridoxal phosphate)lysine is present on Lys225. 350–352 (SPF) serves as a coordination point for (6S)-5,6,7,8-tetrahydrofolate.

It belongs to the SHMT family. Homodimer. Pyridoxal 5'-phosphate is required as a cofactor.

It is found in the cytoplasm. It carries out the reaction (6R)-5,10-methylene-5,6,7,8-tetrahydrofolate + glycine + H2O = (6S)-5,6,7,8-tetrahydrofolate + L-serine. It functions in the pathway one-carbon metabolism; tetrahydrofolate interconversion. It participates in amino-acid biosynthesis; glycine biosynthesis; glycine from L-serine: step 1/1. Its function is as follows. Catalyzes the reversible interconversion of serine and glycine with tetrahydrofolate (THF) serving as the one-carbon carrier. This reaction serves as the major source of one-carbon groups required for the biosynthesis of purines, thymidylate, methionine, and other important biomolecules. Also exhibits THF-independent aldolase activity toward beta-hydroxyamino acids, producing glycine and aldehydes, via a retro-aldol mechanism. This chain is Serine hydroxymethyltransferase, found in Lactobacillus gasseri (strain ATCC 33323 / DSM 20243 / BCRC 14619 / CIP 102991 / JCM 1131 / KCTC 3163 / NCIMB 11718 / NCTC 13722 / AM63).